We begin with the raw amino-acid sequence, 151 residues long: Deoxyuridine 5'-triphosphate nucleotidohydrolase (151 aa).

Substrate contacts are provided by residues 70 to 72 (RSG), N83, 87 to 89 (LID), and M97.

This sequence belongs to the dUTPase family. It depends on Mg(2+) as a cofactor.

It carries out the reaction dUTP + H2O = dUMP + diphosphate + H(+). Its pathway is pyrimidine metabolism; dUMP biosynthesis; dUMP from dCTP (dUTP route): step 2/2. Its function is as follows. This enzyme is involved in nucleotide metabolism: it produces dUMP, the immediate precursor of thymidine nucleotides and it decreases the intracellular concentration of dUTP so that uracil cannot be incorporated into DNA. This chain is Deoxyuridine 5'-triphosphate nucleotidohydrolase, found in Stutzerimonas stutzeri (strain A1501) (Pseudomonas stutzeri).